A 62-amino-acid chain; its full sequence is MKAADIRNLDSNQIHNKIAELKAELFNLRFQHAVGQLENTARLRTVKKTIAQMKTIISERGE.

The protein belongs to the universal ribosomal protein uL29 family.

The sequence is that of Large ribosomal subunit protein uL29 from Acholeplasma laidlawii (strain PG-8A).